A 334-amino-acid chain; its full sequence is N-acetylmuramoyl-L-alanine amidase sle1 (334 aa).

A signal peptide spans 1-25 (MQKKVIAAIIGTSAISAVAATQANA). The 44-residue stretch at 27-70 (TTHTVKPGESVWAISNKYGISIAKLKSLNNLTSNLIFPNQVLKV) folds into the LysM 1 domain. Residues 71–86 (SGSSNSTSNSSRPSTN) are compositionally biased toward low complexity. The interval 71–90 (SGSSNSTSNSSRPSTNSGGG) is disordered. 2 LysM domains span residues 91–134 (SYYT…KLKV) and 158–201 (SYYT…KLKV). A Peptidase C51 domain is found at 210-334 (GSATTTNRGY…YQVNNYRYIH (125 aa)).

Its subcellular location is the secreted. It localises to the cell surface. It carries out the reaction Hydrolyzes the link between N-acetylmuramoyl residues and L-amino acid residues in certain cell-wall glycopeptides.. Peptidoglycan hydrolase involved in the splitting of the septum during cell division. This is N-acetylmuramoyl-L-alanine amidase sle1 (sle1) from Staphylococcus aureus (strain USA300).